Consider the following 408-residue polypeptide: MNSIQENEHVTVFREFLKIRTDHPTPDYESSTKFLVEKAKEYNIPYEVYRETGTPIVLMKIEGLEPNLKTVLLNSHVDVVPAVHDSWKVDPFSAWKDESGNIFGRGTQDMKCVCMQFLEVARRIVQSGQKLKRTLHLSFVPDEEIGGSGKGMEKFVYTEKFRQLNIGLCLDEGLASPTNDFTVFYGERAPWWVHITAVGNAGHGSRFIEGTAIEKLMRTINKMLAFRQEQFESLHHGQHECGKKLGDVTSLNLTVLKAGIPIDHSNNFSYNVIPTQAEAGFDIRIPPTVNLDQFLDQIKEWTAEEGLSFKFASYIPKNEMTKLDSDNKWWENFKESCKKMDINLVTEIFPAATDSRFIRNLGIPAFGFSPINNTPILLHDHNEFLNEKVYLRGIDIFMGIIPNLVNME.

Residue histidine 76 participates in Zn(2+) binding. Residue aspartate 78 is part of the active site. Position 109 (aspartate 109) interacts with Zn(2+). The Proton acceptor role is filled by glutamate 143. 3 residues coordinate Zn(2+): glutamate 144, glutamate 172, and histidine 379.

This sequence belongs to the peptidase M20A family. As to quaternary structure, homodimer. The cofactor is Zn(2+).

The protein resides in the cytoplasm. The enzyme catalyses an N-acyl-L-amino acid + H2O = an L-alpha-amino acid + a carboxylate. The catalysed reaction is an N-acetyl-L-cysteine-S-conjugate + H2O = an S-substituted L-cysteine + acetate. Involved in the hydrolysis of N-acylated or N-acetylated amino acids (except L-aspartate). In Dictyostelium discoideum (Social amoeba), this protein is Aminoacylase-1 (acy1).